A 373-amino-acid chain; its full sequence is Glutamate 5-kinase 2 (373 aa).

Lysine 11 serves as a coordination point for ATP. The substrate site is built by serine 51, aspartate 138, and asparagine 150. ATP contacts are provided by residues 170–171 (SD) and 212–218 (TGGMKSK). The PUA domain maps to 279–355 (EGDIVVHNES…TNQETAASSQ (77 aa)).

Belongs to the glutamate 5-kinase family.

Its subcellular location is the cytoplasm. It carries out the reaction L-glutamate + ATP = L-glutamyl 5-phosphate + ADP. It participates in amino-acid biosynthesis; L-proline biosynthesis; L-glutamate 5-semialdehyde from L-glutamate: step 1/2. Its function is as follows. Catalyzes the transfer of a phosphate group to glutamate to form L-glutamate 5-phosphate. The polypeptide is Glutamate 5-kinase 2 (Bacillus licheniformis (strain ATCC 14580 / DSM 13 / JCM 2505 / CCUG 7422 / NBRC 12200 / NCIMB 9375 / NCTC 10341 / NRRL NRS-1264 / Gibson 46)).